Here is a 309-residue protein sequence, read N- to C-terminus: Porphobilinogen deaminase (309 aa).

S-(dipyrrolylmethanemethyl)cysteine is present on Cys-241.

This sequence belongs to the HMBS family. In terms of assembly, monomer. Dipyrromethane serves as cofactor.

The catalysed reaction is 4 porphobilinogen + H2O = hydroxymethylbilane + 4 NH4(+). It participates in porphyrin-containing compound metabolism; protoporphyrin-IX biosynthesis; coproporphyrinogen-III from 5-aminolevulinate: step 2/4. Tetrapolymerization of the monopyrrole PBG into the hydroxymethylbilane pre-uroporphyrinogen in several discrete steps. This is Porphobilinogen deaminase from Bacillus thuringiensis subsp. konkukian (strain 97-27).